The primary structure comprises 447 residues: Delta(5) fatty acid desaturase fat-4 (447 aa).

The region spanning 1 to 80 (MVLREQEHEP…TQEPEIPDIK (80 aa)) is the Cytochrome b5 heme-binding domain. The next 4 helical transmembrane spans lie at 137–157 (IFTILFAFYLQYHTYYLPSAI), 257–277 (WTFMLPFLRLSWLLQSIIFVS), 292–312 (IYEQVGLSLHWAWSLGQLYFL), and 319–339 (IMFFLVSHLVGGFLLSHVVTF).

This sequence belongs to the fatty acid desaturase type 1 family.

The protein localises to the membrane. It carries out the reaction (11Z,14Z)-eicosadienoyl-CoA + 2 Fe(II)-[cytochrome b5] + O2 + 2 H(+) = (5Z,11Z,14Z)-eicosatrienoyl-CoA + 2 Fe(III)-[cytochrome b5] + 2 H2O. It catalyses the reaction (11Z,14Z,17Z)-eicosatrienoyl-CoA + 2 Fe(II)-[cytochrome b5] + O2 + 2 H(+) = (5Z,11Z,14Z,17Z)-eicosatetraenoyl-CoA + 2 Fe(III)-[cytochrome b5] + 2 H2O. The catalysed reaction is (8Z,11Z,14Z,17Z)-eicosatetraenoyl-CoA + 2 Fe(II)-[cytochrome b5] + O2 + 2 H(+) = (5Z,8Z,11Z,14Z,17Z)-eicosapentaenoyl-CoA + 2 Fe(III)-[cytochrome b5] + 2 H2O. The enzyme catalyses (8Z,11Z,14Z)-eicosatrienoyl-CoA + 2 Fe(II)-[cytochrome b5] + O2 + 2 H(+) = (5Z,8Z,11Z,14Z)-eicosatetraenoyl-CoA + 2 Fe(III)-[cytochrome b5] + 2 H2O. It functions in the pathway lipid metabolism; polyunsaturated fatty acid biosynthesis. Functionally, can function as a Delta(5) fatty acid desaturase and behaves as a (8-3) desaturase. Introduces a double bond in the fatty acid chain 5 carbons away from carboxy terminal to biosynthesize polyunsaturated fatty acids (PUFAs) endogenously (PUFAs are essential for membrane structure and many cellular and physiological processes). Acts on a variety of substrates such as dihomo-gamma-linoleoyl-CoA ((8Z,11Z,14Z)-eicosatrienoyl-CoA, 20:3n-6) to generate arachidonoyl-CoA ((5Z,8Z,11Z,14Z)-eicosatetraenoyl-CoA, 20:4n-6). Also acts on a number of other substrates, including fatty acids that do not contain a double bond at the 8 position like (11Z,14Z,17Z)-eicosatrienoyl-CoA (20:3n-3) to produce (5Z,11Z,14Z,17Z)-eicosatetraenoyl-CoA (20:4n-3). Unlike plants, Caenorhabditis elegans desaturases seem to use fatty acyl-CoAs as substrates. In Caenorhabditis elegans, this protein is Delta(5) fatty acid desaturase fat-4 (fat-4).